A 223-amino-acid polypeptide reads, in one-letter code: Deoxyribose-phosphate aldolase 1 (223 aa).

Residue aspartate 91 is the Proton donor/acceptor of the active site. The active-site Schiff-base intermediate with acetaldehyde is the lysine 153. Catalysis depends on lysine 182, which acts as the Proton donor/acceptor.

Belongs to the DeoC/FbaB aldolase family. DeoC type 1 subfamily.

The protein resides in the cytoplasm. The enzyme catalyses 2-deoxy-D-ribose 5-phosphate = D-glyceraldehyde 3-phosphate + acetaldehyde. It functions in the pathway carbohydrate degradation; 2-deoxy-D-ribose 1-phosphate degradation; D-glyceraldehyde 3-phosphate and acetaldehyde from 2-deoxy-alpha-D-ribose 1-phosphate: step 2/2. In terms of biological role, catalyzes a reversible aldol reaction between acetaldehyde and D-glyceraldehyde 3-phosphate to generate 2-deoxy-D-ribose 5-phosphate. In Yersinia pestis, this protein is Deoxyribose-phosphate aldolase 1.